The primary structure comprises 347 residues: DNA-directed RNA polymerase subunit alpha (347 aa).

The tract at residues 1–243 is alpha N-terminal domain (alpha-NTD); the sequence is MLIKQGDRLI…DQISVFINFD (243 aa). Residues 260–347 form an alpha C-terminal domain (alpha-CTD) region; that stretch reads VNENLFKGID…EWKRKQQNEA (88 aa).

The protein belongs to the RNA polymerase alpha chain family. Homodimer. The RNAP catalytic core consists of 2 alpha, 1 beta, 1 beta' and 1 omega subunit. When a sigma factor is associated with the core the holoenzyme is formed, which can initiate transcription.

It carries out the reaction RNA(n) + a ribonucleoside 5'-triphosphate = RNA(n+1) + diphosphate. In terms of biological role, DNA-dependent RNA polymerase catalyzes the transcription of DNA into RNA using the four ribonucleoside triphosphates as substrates. In Nitratidesulfovibrio vulgaris (strain DSM 19637 / Miyazaki F) (Desulfovibrio vulgaris), this protein is DNA-directed RNA polymerase subunit alpha.